The primary structure comprises 785 residues: Cadherin-7 (785 aa).

An N-terminal signal peptide occupies residues 1-27 (MKLGKVELCRFLQLIALFLCFSGMNQA). Residues 28-47 (ELPRSRSKPYFQLGRSRTKR) constitute a propeptide that is removed on maturation. The Extracellular portion of the chain corresponds to 28-607 (ELPRSRSKPY…AYILPAGLST (580 aa)). Cadherin domains lie at 49 to 153 (WVWN…EPKF), 154 to 262 (LDGP…PPRF), 263 to 377 (PRRS…PPVF), 378 to 482 (SSPL…APEF), and 482 to 599 (FAMD…AEAY). N-linked (GlcNAc...) asparagine glycosylation is found at asparagine 449 and asparagine 530. The helical transmembrane segment at 608–628 (GALIAILACVLTLLVLILLIV) threads the bilayer. The Cytoplasmic portion of the chain corresponds to 629-785 (TMKRRKKEPL…YGNGQESLYS (157 aa)).

Its subcellular location is the cell membrane. In terms of biological role, cadherins are calcium-dependent cell adhesion proteins. They preferentially interact with themselves in a homophilic manner in connecting cells; cadherins may thus contribute to the sorting of heterogeneous cell types. This is Cadherin-7 (Cdh7) from Rattus norvegicus (Rat).